A 128-amino-acid chain; its full sequence is Small ribosomal subunit protein eS8 (128 aa).

A disordered region spans residues 1 to 37; it reads MGYFQGNDFRKITGGKKGKHRDKRKFELGSPPTETKL. The segment covering 13–23 has biased composition (basic residues); it reads TGGKKGKHRDK.

It belongs to the eukaryotic ribosomal protein eS8 family. As to quaternary structure, part of the 30S ribosomal subunit.

In Sulfurisphaera tokodaii (strain DSM 16993 / JCM 10545 / NBRC 100140 / 7) (Sulfolobus tokodaii), this protein is Small ribosomal subunit protein eS8.